Reading from the N-terminus, the 234-residue chain is Phosphoribosylformylglycinamidine synthase subunit PurQ (234 aa).

The Glutamine amidotransferase type-1 domain occupies 5–234; sequence TVGIVVFPGS…ESLFAHLAGA (230 aa). Catalysis depends on Cys-89, which acts as the Nucleophile. Catalysis depends on residues His-206 and Glu-208.

As to quaternary structure, part of the FGAM synthase complex composed of 1 PurL, 1 PurQ and 2 PurS subunits.

The protein localises to the cytoplasm. The catalysed reaction is N(2)-formyl-N(1)-(5-phospho-beta-D-ribosyl)glycinamide + L-glutamine + ATP + H2O = 2-formamido-N(1)-(5-O-phospho-beta-D-ribosyl)acetamidine + L-glutamate + ADP + phosphate + H(+). It catalyses the reaction L-glutamine + H2O = L-glutamate + NH4(+). Its pathway is purine metabolism; IMP biosynthesis via de novo pathway; 5-amino-1-(5-phospho-D-ribosyl)imidazole from N(2)-formyl-N(1)-(5-phospho-D-ribosyl)glycinamide: step 1/2. Functionally, part of the phosphoribosylformylglycinamidine synthase complex involved in the purines biosynthetic pathway. Catalyzes the ATP-dependent conversion of formylglycinamide ribonucleotide (FGAR) and glutamine to yield formylglycinamidine ribonucleotide (FGAM) and glutamate. The FGAM synthase complex is composed of three subunits. PurQ produces an ammonia molecule by converting glutamine to glutamate. PurL transfers the ammonia molecule to FGAR to form FGAM in an ATP-dependent manner. PurS interacts with PurQ and PurL and is thought to assist in the transfer of the ammonia molecule from PurQ to PurL. This chain is Phosphoribosylformylglycinamidine synthase subunit PurQ, found in Chlorobaculum tepidum (strain ATCC 49652 / DSM 12025 / NBRC 103806 / TLS) (Chlorobium tepidum).